Consider the following 654-residue polypeptide: uncharacterized protein (654 aa).

Residues 1 to 13 (MSNLILTPSNNGT) are compositionally biased toward polar residues. The interval 1–23 (MSNLILTPSNNGTERPYRSRKTR) is disordered. Positions 25-54 (CDNCRLRKSRCVVESIGNPCLLCTQLKIPC) form a DNA-binding region, zn(2)-C6 fungal-type. The interval 63 to 96 (RNKQKKQQDSVSDDTPSEATTTTNDDRDPKYNAL) is disordered.

It is found in the cytoplasm. The protein resides in the nucleus. This is an uncharacterized protein from Schizosaccharomyces pombe (strain 972 / ATCC 24843) (Fission yeast).